We begin with the raw amino-acid sequence, 346 residues long: Probable dolichyl-diphosphooligosaccharide--protein glycosyltransferase subunit 3B (346 aa).

The first 22 residues, 1–22 (MALKSKLVSLLFLIATLSSTFA), serve as a signal peptide directing secretion. The Lumenal segment spans residues 23–189 (ASFSDSDSDS…KVGPIQRPPL (167 aa)). Asparagine 108 is a glycosylation site (N-linked (GlcNAc...) asparagine). A helical transmembrane segment spans residues 190–210 (LSKPQIGIIVALIVIATPFII). Over 211 to 225 (KRVLKGETILHDTRL) the chain is Cytoplasmic. A helical transmembrane segment spans residues 226 to 246 (WLSGAIFIYFFSVAGTMHNII). Topologically, residues 247-277 (RKMPMFLQDRNDPNKLVFFYQGSGMQLGAEG) are lumenal. Residues 278-298 (FAVGFLYTVVGLLLAFVTNVL) form a helical membrane-spanning segment. At 299–308 (VRVKNITAQR) the chain is on the cytoplasmic side. A helical membrane pass occupies residues 309-329 (LIMLLALFISFWAVKKVVYLD). The Lumenal segment spans residues 330–346 (NWKTGYGIHPYWPSSWR).

It belongs to the OST3/OST6 family. Component of the oligosaccharyltransferase (OST) complex.

The protein resides in the endoplasmic reticulum membrane. Subunit of the oligosaccharyl transferase (OST) complex that catalyzes the initial transfer of a defined glycan (Glc(3)Man(9)GlcNAc(2) in eukaryotes) from the lipid carrier dolichol-pyrophosphate to an asparagine residue within an Asn-X-Ser/Thr consensus motif in nascent polypeptide chains, the first step in protein N-glycosylation. N-glycosylation occurs cotranslationally and the complex associates with the Sec61 complex at the channel-forming translocon complex that mediates protein translocation across the endoplasmic reticulum (ER). All subunits are required for a maximal enzyme activity. This is Probable dolichyl-diphosphooligosaccharide--protein glycosyltransferase subunit 3B (OST3B) from Arabidopsis thaliana (Mouse-ear cress).